A 269-amino-acid chain; its full sequence is Shikimate dehydrogenase (NADP(+)) (269 aa).

Residues 14–16 and Thr61 contribute to the shikimate site; that span reads SVS. Lys65 functions as the Proton acceptor in the catalytic mechanism. Residues Asn85 and Asp98 each coordinate shikimate. Residues 120-124, 143-148, and Thr211 contribute to the NADP(+) site; these read GAGGA and NRTEEK. Tyr213 provides a ligand contact to shikimate. Residue Gly234 participates in NADP(+) binding.

It belongs to the shikimate dehydrogenase family. Homodimer.

It catalyses the reaction shikimate + NADP(+) = 3-dehydroshikimate + NADPH + H(+). The protein operates within metabolic intermediate biosynthesis; chorismate biosynthesis; chorismate from D-erythrose 4-phosphate and phosphoenolpyruvate: step 4/7. Its function is as follows. Involved in the biosynthesis of the chorismate, which leads to the biosynthesis of aromatic amino acids. Catalyzes the reversible NADPH linked reduction of 3-dehydroshikimate (DHSA) to yield shikimate (SA). The protein is Shikimate dehydrogenase (NADP(+)) of Archaeoglobus fulgidus (strain ATCC 49558 / DSM 4304 / JCM 9628 / NBRC 100126 / VC-16).